Reading from the N-terminus, the 388-residue chain is Probable peptidoglycan glycosyltransferase FtsW (388 aa).

At 1-19 (MSAAAPKPRPAHRFHIDQT) the chain is on the cytoplasmic side. The helical transmembrane segment at 20–40 (LLSVCLCLLGIGFVMVASSSM) threads the bilayer. Residues 41 to 57 (HLGVKMADDVSYYPFKQ) lie on the Periplasmic side of the membrane. Residues 58 to 78 (LVHIILGLMFAAAILAIPMKY) form a helical membrane-spanning segment. Residues 79-85 (WQKIGQP) lie on the Cytoplasmic side of the membrane. The chain crosses the membrane as a helical span at residues 86-106 (LFIVGLVLLLVVLIPGVGVKV). Residues 107–117 (NGSTRWLSLLG) lie on the Periplasmic side of the membrane. The helical transmembrane segment at 118 to 137 (LRIQVSEVMKFISVVYMAGY) threads the bilayer. The Cytoplasmic portion of the chain corresponds to 138-147 (ITRHSDHVRH). A helical transmembrane segment spans residues 148–168 (SIFGLLRPLMLLSVASILLLL). Over 169 to 170 (EP) the chain is Periplasmic. A helical transmembrane segment spans residues 171–191 (DFGSAVVILIIAMGMMFLGGA). Residue Arg192 is a topological domain, cytoplasmic. A helical membrane pass occupies residues 193–213 (LSPFVALVALISSAGAILASS). The Periplasmic segment spans residues 214–271 (ADYRVKRMTSFLNPWEHARDSGYQLTQALISFGRGEVSGVGLGNGLQKLFYLPEAHTD). A helical transmembrane segment spans residues 272 to 292 (FLFSVLGEELGLVGVTLVIAL). Over 293–315 (FTTLVVRGFSIGEQAEAAGERFS) the chain is Cytoplasmic. The helical transmembrane segment at 316 to 336 (ALVAYGLVIWFGFQAFVNMGV) threads the bilayer. Residues 337–348 (NMGILPTKGLTL) lie on the Periplasmic side of the membrane. The helical transmembrane segment at 349–369 (PLMSYGGGSMIVMCGAMAVLF) threads the bilayer. The Cytoplasmic portion of the chain corresponds to 370–388 (RIHYEVTELHKSNIKGKSR).

This sequence belongs to the SEDS family. FtsW subfamily.

It is found in the cell inner membrane. The enzyme catalyses [GlcNAc-(1-&gt;4)-Mur2Ac(oyl-L-Ala-gamma-D-Glu-L-Lys-D-Ala-D-Ala)](n)-di-trans,octa-cis-undecaprenyl diphosphate + beta-D-GlcNAc-(1-&gt;4)-Mur2Ac(oyl-L-Ala-gamma-D-Glu-L-Lys-D-Ala-D-Ala)-di-trans,octa-cis-undecaprenyl diphosphate = [GlcNAc-(1-&gt;4)-Mur2Ac(oyl-L-Ala-gamma-D-Glu-L-Lys-D-Ala-D-Ala)](n+1)-di-trans,octa-cis-undecaprenyl diphosphate + di-trans,octa-cis-undecaprenyl diphosphate + H(+). It functions in the pathway cell wall biogenesis; peptidoglycan biosynthesis. Functionally, peptidoglycan polymerase that is essential for cell division. The polypeptide is Probable peptidoglycan glycosyltransferase FtsW (Methylomonas methanica (strain DSM 25384 / MC09)).